We begin with the raw amino-acid sequence, 327 residues long: Polyadenylate-binding protein-interacting protein 9 (327 aa).

Residues 59-69 (KLNPLAKEFFP) carry the PAM2-like motif. Residues 97 to 113 (KQSGEEFDLDAKKDDNT) show a composition bias toward basic and acidic residues. Residues 97-132 (KQSGEEFDLDAKKDDNTRKRRNYSQGRRRLTGRISK) form a disordered region. The Bipartite nuclear localization signal signature appears at 114 to 125 (RKRRNYSQGRRR). A compositionally biased stretch (basic residues) spans 114 to 127 (RKRRNYSQGRRRLT). RRM domains are found at residues 141 to 216 (RTVY…PSKT) and 238 to 314 (RTIY…PSKT). The interval 308–327 (RVSPSKTPVRPRITRPPSTN) is disordered.

The protein resides in the nucleus. The chain is Polyadenylate-binding protein-interacting protein 9 (CID9) from Arabidopsis thaliana (Mouse-ear cress).